An 800-amino-acid chain; its full sequence is U4/U6.U5 tri-snRNP-associated protein 1 (800 aa).

A disordered region spans residues 1–120; the sequence is MGSSKKHRGE…SSGDASSLSI (120 aa). Residues 32–42 show a composition bias toward basic residues; the sequence is HREHKKHKHRS. Positions 58-101 are enriched in basic and acidic residues; the sequence is ERGGERGSGRRGAEAEARSSTHGRERSQAEPSERRVKREKRDDG. The segment covering 104–119 has biased composition (low complexity); the sequence is AAASSKTSSGDASSLS. Glycyl lysine isopeptide (Lys-Gly) (interchain with G-Cter in SUMO2) cross-links involve residues lysine 125 and lysine 133. Lysine 141 participates in a covalent cross-link: Glycyl lysine isopeptide (Lys-Gly) (interchain with G-Cter in SUMO1); alternate. Lysine 141 is covalently cross-linked (Glycyl lysine isopeptide (Lys-Gly) (interchain with G-Cter in SUMO2); alternate). Glycyl lysine isopeptide (Lys-Gly) (interchain with G-Cter in SUMO2) cross-links involve residues lysine 147 and lysine 188. Positions 157–231 form a coiled coil; it reads NPMALRQREE…KLLEEMDQEF (75 aa). Position 189 is a phosphothreonine (threonine 189). Lysine 277 participates in a covalent cross-link: Glycyl lysine isopeptide (Lys-Gly) (interchain with G-Cter in SUMO2). Positions 311 to 330 are disordered; sequence PDYLPYAEDESVDDLAQQKP. A Phosphoserine modification is found at serine 321. Residues lysine 329 and lysine 336 each participate in a glycyl lysine isopeptide (Lys-Gly) (interchain with G-Cter in SUMO2) cross-link. Serine 348 carries the phosphoserine modification. The residue at position 392 (threonine 392) is a Phosphothreonine. Glycyl lysine isopeptide (Lys-Gly) (interchain with G-Cter in SUMO2) cross-links involve residues lysine 400 and lysine 414. Positions 419–497 are disordered; sequence RADDLLPLGD…QVLEEDEAEL (79 aa). Residue threonine 430 is modified to Phosphothreonine. A phosphoserine mark is found at serine 448, serine 474, serine 486, and serine 521. A coiled-coil region spans residues 490–533; sequence LEEDEAELELQKQLEKGRRLRQLQQLQQLRDSGEKVVEIVKKLE. Residue lysine 548 forms a Glycyl lysine isopeptide (Lys-Gly) (interchain with G-Cter in SUMO2) linkage. Positions 571–604 are disordered; that stretch reads LAGNREEQEELMDFERDEERSANGGSESDGEENI. Residues serine 591, serine 596, serine 598, and serine 621 each carry the phosphoserine modification. Glycyl lysine isopeptide (Lys-Gly) (interchain with G-Cter in SUMO2) cross-links involve residues lysine 648, lysine 657, and lysine 684. Residue threonine 695 is modified to Phosphothreonine. Glycyl lysine isopeptide (Lys-Gly) (interchain with G-Cter in SUMO2) cross-links involve residues lysine 699, lysine 709, lysine 723, lysine 749, and lysine 758. Serine 761 is modified (phosphoserine). Residue threonine 764 is modified to Phosphothreonine. Glycyl lysine isopeptide (Lys-Gly) (interchain with G-Cter in SUMO2) cross-links involve residues lysine 775 and lysine 780. A Phosphoserine modification is found at serine 789. A Glycyl lysine isopeptide (Lys-Gly) (interchain with G-Cter in SUMO2) cross-link involves residue lysine 791.

Belongs to the SNU66/SART1 family. In terms of assembly, identified in the spliceosome C complex. Component of the U4/U6-U5 tri-snRNP complex composed of the U4, U6 and U5 snRNAs and at least PRPF3, PRPF4, PRPF6, PRPF8, PRPF31, SNRNP200, TXNL4A, SNRNP40, DDX23, CD2BP2, PPIH, SNU13, EFTUD2, SART1 and USP39. Interacts with UBL5. Interacts with IVNS1ABP (via Kelch repeats). Post-translationally, sumoylated with SUMO2. As to expression, ubiquitously expressed.

It localises to the nucleus. In terms of biological role, plays a role in mRNA splicing as a component of the U4/U6-U5 tri-snRNP, one of the building blocks of the spliceosome. May also bind to DNA. The polypeptide is U4/U6.U5 tri-snRNP-associated protein 1 (SART1) (Homo sapiens (Human)).